Consider the following 490-residue polypeptide: Cytochrome P450 2C6 (490 aa).

2 positions are modified to N6-acetyllysine: K249 and K375. A heme-binding site is contributed by C435.

It belongs to the cytochrome P450 family. The cofactor is heme.

The protein resides in the endoplasmic reticulum membrane. It localises to the microsome membrane. It catalyses the reaction an organic molecule + reduced [NADPH--hemoprotein reductase] + O2 = an alcohol + oxidized [NADPH--hemoprotein reductase] + H2O + H(+). In terms of biological role, cytochromes P450 are a group of heme-thiolate monooxygenases. In liver microsomes, this enzyme is involved in an NADPH-dependent electron transport pathway. It oxidizes a variety of structurally unrelated compounds, including steroids, fatty acids, and xenobiotics. The sequence is that of Cytochrome P450 2C6 (Cyp2c6) from Rattus norvegicus (Rat).